Consider the following 143-residue polypeptide: uncharacterized protein (143 aa).

Residues 5–137 (DARLASDLSL…LRSAADLMLA (133 aa)) form the HTH marR-type domain. The H-T-H motif DNA-binding region spans 51-74 (PGALAIRERVRPPSMTRVIASLAD).

Homodimer.

This is an uncharacterized protein from Mycobacterium bovis (strain ATCC BAA-935 / AF2122/97).